A 347-amino-acid polypeptide reads, in one-letter code: MLFSYLLATLPLLANAALTYKGADISSVFIEEKAGVAYKNLAGETQALEAILTDNGVNSIRQRVWVKNGDYDLTYNVNLAKRVAATGASIYLDLHYSDDWADPKHQTTPDGWSTDDINTLADQIYQYTLSVCNTFAEEKINVEIVSIGNEITSGLLWPLGKTPNYENIARLLHSGAWGVKDSKLATKPKILIHLDNGWDWDQQKYFYDTALGTGLLTSDDFDMIGVSYYPFYNEKATLASLKTSLTNIQTTYGKEVAVVETNWPVKCSSPEFAFPADLKDIPFSVDGQVTFLQRLADTLTATKASGFFYWEPAWTKNAGLGSSCEDNLLVDYNTNQVRSSVKAFGQV.

Residues 1–16 (MLFSYLLATLPLLANA) form the signal peptide. The active-site Proton donor is the glutamate 150. The active-site Nucleophile is the glutamate 260.

The protein belongs to the glycosyl hydrolase 53 family.

It is found in the secreted. The enzyme catalyses The enzyme specifically hydrolyzes (1-&gt;4)-beta-D-galactosidic linkages in type I arabinogalactans.. In terms of biological role, endogalactanase involved in the degradation of plant cell wall polysaccharides, and more particularly of hairy regions of pectin. The polypeptide is Probable arabinogalactan endo-beta-1,4-galactanase A (galA) (Aspergillus flavus (strain ATCC 200026 / FGSC A1120 / IAM 13836 / NRRL 3357 / JCM 12722 / SRRC 167)).